Here is a 167-residue protein sequence, read N- to C-terminus: Centrin-3 (167 aa).

4 EF-hand domains span residues 25–60, 61–96, 98–133, and 134–167; these read EQKQEIKDAFELFDTDKDEAIDYHELKVAMRALGFD, VKKADVLKILKDYDREATGKITFEDFNEVVTDWILE, DPHEEILKAFKLFDDDDSGKISLRNLRRVARELGEN, and MSDEELRAMIEEFDKDGDGEINQEEFIAIMTGDI. Ser135 is subject to Phosphoserine. Asp147, Asp149, Asp151, Glu153, and Glu158 together coordinate Ca(2+).

This sequence belongs to the centrin family. Monomer. Component of the nuclear pore complex (NPC)-associated TREX-2 complex (transcription and export complex 2), composed of at least GANP, 2 copies of ENY2, PCID2, SEM1/DSS1, and either centrin CETN2 or centrin CETN3. The TREX-2 complex also associates with ALYREF/ALY and with the nucleoporin NUP153. Interacts with USP49.

The protein localises to the cytoplasm. It is found in the cytoskeleton. Its subcellular location is the microtubule organizing center. The protein resides in the centrosome. It localises to the nucleus. The protein localises to the nucleolus. It is found in the nucleus envelope. Its subcellular location is the nuclear pore complex. The protein resides in the centriole. Functionally, plays a fundamental role in microtubule-organizing center structure and function. In terms of biological role, as a component of the TREX-2 complex, involved in the export of mRNAs to the cytoplasm through the nuclear pores. The protein is Centrin-3 (CETN3) of Homo sapiens (Human).